The sequence spans 192 residues: Imidazoleglycerol-phosphate dehydratase (192 aa).

The protein belongs to the imidazoleglycerol-phosphate dehydratase family.

It is found in the cytoplasm. It catalyses the reaction D-erythro-1-(imidazol-4-yl)glycerol 3-phosphate = 3-(imidazol-4-yl)-2-oxopropyl phosphate + H2O. It functions in the pathway amino-acid biosynthesis; L-histidine biosynthesis; L-histidine from 5-phospho-alpha-D-ribose 1-diphosphate: step 6/9. The polypeptide is Imidazoleglycerol-phosphate dehydratase (Vesicomyosocius okutanii subsp. Calyptogena okutanii (strain HA)).